The chain runs to 398 residues: Serine/threonine-protein kinase 32A (398 aa).

Glycine 2 carries N-myristoyl glycine lipidation. One can recognise a Protein kinase domain in the interval 23 to 281; that stretch reads FEILRAIGKG…LTDIQNFPYM (259 aa). Residues 29–37 and lysine 52 each bind ATP; that span reads IGKGSFGKV. Residue aspartate 146 is the Proton acceptor of the active site. The tract at residues 379 to 398 is disordered; it reads ALEQTKNNTEEEEDGQNNNL. A compositionally biased stretch (acidic residues) spans 388–398; the sequence is EEEEDGQNNNL.

The protein belongs to the protein kinase superfamily. Ser/Thr protein kinase family. Mg(2+) serves as cofactor.

The protein localises to the cell membrane. The catalysed reaction is L-seryl-[protein] + ATP = O-phospho-L-seryl-[protein] + ADP + H(+). It carries out the reaction L-threonyl-[protein] + ATP = O-phospho-L-threonyl-[protein] + ADP + H(+). This chain is Serine/threonine-protein kinase 32A, found in Mus musculus (Mouse).